A 287-amino-acid chain; its full sequence is Energy-coupling factor transporter ATP-binding protein EcfA2 (287 aa).

Residues 3-246 form the ABC transporter domain; that stretch reads VKFSQVSYVY…TNYVNQLHLD (244 aa). 40-47 contributes to the ATP binding site; the sequence is GQTGSGKS.

The protein belongs to the ABC transporter superfamily. Energy-coupling factor EcfA family. In terms of assembly, forms a stable energy-coupling factor (ECF) transporter complex composed of 2 membrane-embedded substrate-binding proteins (S component), 2 ATP-binding proteins (A component) and 2 transmembrane proteins (T component).

It localises to the cell membrane. ATP-binding (A) component of a common energy-coupling factor (ECF) ABC-transporter complex. Unlike classic ABC transporters this ECF transporter provides the energy necessary to transport a number of different substrates. The sequence is that of Energy-coupling factor transporter ATP-binding protein EcfA2 from Staphylococcus saprophyticus subsp. saprophyticus (strain ATCC 15305 / DSM 20229 / NCIMB 8711 / NCTC 7292 / S-41).